A 318-amino-acid chain; its full sequence is MAGLKRRASQVWPEERGEQEHGLYSLHRMFDIVGTHLTHRDVRVLSFLFVDVIDDHERGLIRNGRDFLLALERQGRCDESNFRQVLQLLRIITRHDLLPYVTLKKRRAVCPDLVDKYLEETSIRYVTPRALSDPEPRPPQPSKTVPPHYPVVCCPTSGSQMCSKRPARGRTTLGSQRKRRKSVTPDPKEKQTCDIRLRVRAEYCQHETALQGNVFSNKQDPLERQFERFNQANTILKSRDLGSIICDIKFSELTYLDAFWRDYINGSLLEALKGVFITDSLKQAVGHEAIKLLVNVDEEDYELGRQKLLRNLMLQALP.

The 79-residue stretch at 25–103 folds into the DED domain; it reads SLHRMFDIVG…RHDLLPYVTL (79 aa). A disordered region spans residues 128–191; sequence PRALSDPEPR…SVTPDPKEKQ (64 aa).

As to quaternary structure, interacts with CASP8, CASP10, KRT8, KRT18, CASP3 and FADD. Homodimerizes and heterodimerizes with DEDD2. Exists predominantly in a mono- or diubiquitinated form. As to expression, ubiquitously expressed.

It is found in the cytoplasm. It localises to the nucleus. The protein localises to the nucleolus. In terms of biological role, a scaffold protein that directs CASP3 to certain substrates and facilitates their ordered degradation during apoptosis. May also play a role in mediating CASP3 cleavage of KRT18. Regulates degradation of intermediate filaments during apoptosis. May play a role in the general transcription machinery in the nucleus and might be an important regulator of the activity of GTF3C3. Inhibits DNA transcription in vitro. This Mus musculus (Mouse) protein is Death effector domain-containing protein (Dedd).